The following is a 397-amino-acid chain: MSNVNTLSALAKSGALSGKRVFIRADLNVPFDDAGRISEDTRIRASVPGIRLALDAGAAVMVTSHLGRPKEGALTEADSLAPVAQRLSELLGMQVRLVPDWVDGVSVEPGEVVLLENCRGNVGEKKDDEGLSRKMAALCDVYVNDAFGTAHRAEATTHGIARFAPVACAGPLLEAELEALGRALHDPKRSLVAIVGGSKVSTKLSILQSLADKVDQLVVGGGIANTFMLAAGLPIGKSLAEPEQVEQARAVIEIMKRRGAEVPIPTDVVCAKSFGADAAATVKAAADVAEDDMILDIGPQTAQRLADILKAAGTIVWNGPVGVFEFDQFAHGTEVVARAIADSAGFSIAGGGDTLAAIAKYGIADQTGYISTGGGAFLEFLEGKALPAVAVLQARAA.

Residues 26 to 28 (DLN), arginine 42, 65 to 68 (HLGR), arginine 119, and arginine 152 each bind substrate. ATP is bound by residues lysine 203, glutamate 325, and 351–354 (GGDT).

The protein belongs to the phosphoglycerate kinase family. As to quaternary structure, monomer.

The protein localises to the cytoplasm. The enzyme catalyses (2R)-3-phosphoglycerate + ATP = (2R)-3-phospho-glyceroyl phosphate + ADP. Its pathway is carbohydrate degradation; glycolysis; pyruvate from D-glyceraldehyde 3-phosphate: step 2/5. In Bordetella bronchiseptica (strain ATCC BAA-588 / NCTC 13252 / RB50) (Alcaligenes bronchisepticus), this protein is Phosphoglycerate kinase.